A 234-amino-acid polypeptide reads, in one-letter code: Probable septum site-determining protein MinC (234 aa).

The protein belongs to the MinC family. Interacts with MinD and FtsZ.

Functionally, cell division inhibitor that blocks the formation of polar Z ring septums. Rapidly oscillates between the poles of the cell to destabilize FtsZ filaments that have formed before they mature into polar Z rings. Prevents FtsZ polymerization. This is Probable septum site-determining protein MinC from Pseudoalteromonas translucida (strain TAC 125).